The chain runs to 274 residues: Large ribosomal subunit protein uL2 (274 aa).

The tract at residues 223 to 256 (VVMNPVDHPHGGGEGKTGEGRHPVDPWGNLTKGY) is disordered. Over residues 229–246 (DHPHGGGEGKTGEGRHPV) the composition is skewed to basic and acidic residues.

Belongs to the universal ribosomal protein uL2 family. Part of the 50S ribosomal subunit. Forms a bridge to the 30S subunit in the 70S ribosome.

Functionally, one of the primary rRNA binding proteins. Required for association of the 30S and 50S subunits to form the 70S ribosome, for tRNA binding and peptide bond formation. It has been suggested to have peptidyltransferase activity; this is somewhat controversial. Makes several contacts with the 16S rRNA in the 70S ribosome. This Albidiferax ferrireducens (strain ATCC BAA-621 / DSM 15236 / T118) (Rhodoferax ferrireducens) protein is Large ribosomal subunit protein uL2.